A 463-amino-acid polypeptide reads, in one-letter code: Carnosine N-methyltransferase (463 aa).

Disordered regions lie at residues 1-64 (MTKN…SQLK) and 79-104 (KHNH…EKEE). Residues 9–58 (KSNNSNISNNNNNNNNNNNNNNNNNNNNNNNNNNNNNNNNNNNNNNNNKN) are compositionally biased toward low complexity. A compositionally biased stretch (basic and acidic residues) spans 79 to 93 (KHNHDHSHDHNHDYD). Over residues 94–103 (DNNEDDEEKE) the composition is skewed to acidic residues. Gln-215, Arg-218, Gly-260, Glu-281, Asp-351, Phe-352, and Cys-367 together coordinate S-adenosyl-L-methionine. A carnosine-binding site is contributed by Asp-371. Tyr-379 lines the S-adenosyl-L-methionine pocket. The carnosine site is built by His-402 and Tyr-450.

Belongs to the carnosine N-methyltransferase family.

It carries out the reaction carnosine + S-adenosyl-L-methionine = anserine + S-adenosyl-L-homocysteine + H(+). Functionally, N-methyltransferase that mediates the formation of anserine (beta-alanyl-N(Pi)-methyl-L-histidine) from carnosine. This is Carnosine N-methyltransferase from Dictyostelium discoideum (Social amoeba).